The chain runs to 302 residues: Uricase (302 aa).

Serine 2 carries the post-translational modification N-acetylserine. Catalysis depends on charge relay system residues lysine 11 and threonine 58. Residues threonine 58, aspartate 59, phenylalanine 160, arginine 177, valine 228, glutamine 229, and asparagine 255 each coordinate 5-hydroxyisourate. Position 58 (threonine 58) interacts with O2. Residues threonine 58, aspartate 59, phenylalanine 160, arginine 177, valine 228, glutamine 229, and asparagine 255 each contribute to the urate site. Residue asparagine 255 participates in O2 binding. The active-site Charge relay system is the histidine 257. The Microbody targeting signal signature appears at 300-302 (SKL).

Belongs to the uricase family. In terms of assembly, homotetramer.

Its subcellular location is the peroxisome. The enzyme catalyses urate + O2 + H2O = 5-hydroxyisourate + H2O2. The protein operates within purine metabolism; urate degradation; (S)-allantoin from urate: step 1/3. With respect to regulation, 8-Azaxanthine is one of the most potent competitive inhibitors of uricase activity. Hypoxanthine has only a small inhibitor effect, and caffeine has no effect at all. Azide not only competes with dioxygen but also competes with the substrate for its enzymatic site. Functionally, urate oxidase is a cofactorless enzyme involved in the metabolism of purines. Catalyzes, in the presence of molecular oxygen, the hydroxylation of uric acid to metastable 5-hydroxyisourate (5-HIU) which is further degraded to allantoin. In Aspergillus flavus, this protein is Uricase.